Consider the following 382-residue polypeptide: Galactokinase (382 aa).

34 to 37 contributes to the substrate binding site; that stretch reads EHTD. An ATP-binding site is contributed by 124 to 130; sequence GAGLSSS. The Mg(2+) site is built by serine 130 and glutamate 162. Aspartate 174 acts as the Proton acceptor in catalysis. Residue tyrosine 223 coordinates substrate.

The protein belongs to the GHMP kinase family. GalK subfamily.

It localises to the cytoplasm. It catalyses the reaction alpha-D-galactose + ATP = alpha-D-galactose 1-phosphate + ADP + H(+). The protein operates within carbohydrate metabolism; galactose metabolism. Functionally, catalyzes the transfer of the gamma-phosphate of ATP to D-galactose to form alpha-D-galactose-1-phosphate (Gal-1-P). In Escherichia coli (strain SMS-3-5 / SECEC), this protein is Galactokinase.